Here is a 1011-residue protein sequence, read N- to C-terminus: RAS protein activator like-3 (1011 aa).

The tract at residues 1-38 (MDPPSPSRTSQTQPTATSPLTSYRWHTGGGGEKAAGGF) is disordered. Positions 7-22 (SRTSQTQPTATSPLTS) are enriched in low complexity. 2 positions are modified to phosphoserine: Ser18 and Ser51. Disordered stretches follow at residues 52 to 136 (HQEP…PVWD), 151 to 197 (GGEE…GPNQ), and 209 to 230 (KEKKKARLEPRDGPPSALGSRE). The span at 81–95 (SRLRLSKALWGRHKN) shows a compositional bias: basic residues. The span at 100 to 117 (PDPEPEQEAPELEPEPEL) shows a compositional bias: acidic residues. Residues 118–131 (EPPTPQIPEAPTPN) show a composition bias toward pro residues. 4 positions are modified to phosphoserine: Ser164, Ser166, Ser167, and Ser170. Residues 179-190 (RDPDRMPGKTEP) are compositionally biased toward basic and acidic residues. The region spanning 197 to 293 (QVHNVRGLLK…WIEDLRRQFQ (97 aa)) is the PH domain. Ser224, Ser228, and Ser231 each carry phosphoserine. Phosphothreonine is present on Thr234. The 121-residue stretch at 284–404 (WIEDLRRQFQ…APAAGLERWF (121 aa)) folds into the C2 domain. Residues 474 to 682 (GRAQALVTDL…PAMQCFLDQV (209 aa)) enclose the Ras-GAP domain. Disordered stretches follow at residues 756–885 (QVHS…LGTH) and 987–1011 (LSPRTRGSWSQPQPLKAPCLNGDTT). Ser787 and Ser790 each carry phosphoserine. Over residues 792-808 (RRSESWARPRPDEERPL) the composition is skewed to basic and acidic residues. Composition is skewed to polar residues over residues 871–882 (QMDQPQDRNQAL) and 987–999 (LSPRTRGSWSQPQ). A coiled-coil region spans residues 888–988 (VNKLAELQCE…RDAVQSLQLS (101 aa)). At Ser988 the chain carries Phosphoserine.

Predominantly expressed in cells of hematopoietic lineages.

The protein resides in the cytoplasm. Its subcellular location is the cell cortex. Functions as a Ras GTPase-activating protein. Plays an important role in the expansion and functions of natural killer T (NKT) cells in the liver by negatively regulating RAS activity and the down-stream ERK signaling pathway. The protein is RAS protein activator like-3 (RASAL3) of Homo sapiens (Human).